Consider the following 297-residue polypeptide: Trimeric intracellular cation channel type A (297 aa).

The Lumenal portion of the chain corresponds to 1-18 (MDLISSLSLGELALSFSR). Residues 19–39 (VPLFPVFDLSYFIVSIIYLKY) form a helical membrane-spanning segment. Topologically, residues 40–51 (EPGSVELSRRHP) are cytoplasmic. The helical transmembrane segment at 52 to 72 (VASWLCAMLHCFGSYILADLL) threads the bilayer. Residues 73–85 (LGEPIIDYFSNSS) lie on the Lumenal side of the membrane. Glycine 74 is a binding site for Ca(2+). Residues 86–106 (SILLASGVWYLIFFCPLDLFY) traverse the membrane as a helical segment. Residues 107 to 143 (KCVCFLPVKLIFVAMKEVVRVRKIAVGIHHAHHYHHG) are Cytoplasmic-facing. Positions 122 and 126 each coordinate a 1,2-diacyl-sn-glycero-3-phospho-(1D-myo-inositol-4,5-bisphosphate). Residues 144–164 (WFIMIATGWVKGSGVALLSNL) form a helical membrane-spanning segment. Residues 165–177 (EQLLRGVWKPETN) lie on the Lumenal side of the membrane. A helical membrane pass occupies residues 178 to 198 (EILHMSFPTKASLYGAILFTL). Topologically, residues 199 to 208 (QQTRWLPVSK) are cytoplasmic. A helical transmembrane segment spans residues 209 to 229 (ASLIFVFTMFMVSCKVFLTAT). Topologically, residues 230–233 (HSHS) are lumenal. Residues 234-254 (SPFDVLEGYICPVLFGATWGG) traverse the membrane as a helical segment. Over 255-297 (DHHHDNHGAPHGMGLGTQHSGLPAKAKEELSEGFRKKKTKKAD) the chain is Cytoplasmic. Residues 259–297 (DNHGAPHGMGLGTQHSGLPAKAKEELSEGFRKKKTKKAD) are disordered. The span at 279–288 (KAKEELSEGF) shows a compositional bias: basic and acidic residues.

This sequence belongs to the TMEM38 family. As to quaternary structure, homotrimer; conformation seems to be controled by binding to diacylglycerol (DAG).

The protein localises to the sarcoplasmic reticulum membrane. The protein resides in the nucleus membrane. It carries out the reaction K(+)(in) = K(+)(out). With respect to regulation, channel activity is activated by a change of voltage within the sarcoplasmic reticulum lumen and blocked by luminal high Ca(2+) levels. Functionally, intracellular monovalent cation channel required for maintenance of rapid intracellular calcium release. Acts as a potassium counter-ion channel that functions in synchronization with calcium release from intracellular stores. Opened by a change of voltage within the sarcoplasmic reticulum lumen. This chain is Trimeric intracellular cation channel type A, found in Rattus norvegicus (Rat).